The sequence spans 89 residues: Small ribosomal subunit protein uS15 (89 aa).

This sequence belongs to the universal ribosomal protein uS15 family. In terms of assembly, part of the 30S ribosomal subunit. Forms a bridge to the 50S subunit in the 70S ribosome, contacting the 23S rRNA.

In terms of biological role, one of the primary rRNA binding proteins, it binds directly to 16S rRNA where it helps nucleate assembly of the platform of the 30S subunit by binding and bridging several RNA helices of the 16S rRNA. Functionally, forms an intersubunit bridge (bridge B4) with the 23S rRNA of the 50S subunit in the ribosome. This Haemophilus influenzae (strain 86-028NP) protein is Small ribosomal subunit protein uS15.